Reading from the N-terminus, the 715-residue chain is Fatty acid oxidation complex subunit alpha (715 aa).

Positions 1–190 (MIYQGKAITV…KVGAVDAVVA (190 aa)) are enoyl-CoA hydratase/isomerase. Residue Asp-297 participates in substrate binding. Positions 312–715 (KDVKLAAVLG…MAKNGQKFFG (404 aa)) are 3-hydroxyacyl-CoA dehydrogenase. Residues Met-325, Asp-344, 401–403 (VVE), Lys-408, and Ser-430 each bind NAD(+). His-451 (for 3-hydroxyacyl-CoA dehydrogenase activity) is an active-site residue. An NAD(+)-binding site is contributed by Asn-454. Residues Asn-501 and Tyr-660 each coordinate substrate.

This sequence in the N-terminal section; belongs to the enoyl-CoA hydratase/isomerase family. It in the C-terminal section; belongs to the 3-hydroxyacyl-CoA dehydrogenase family. Heterotetramer of two alpha chains (FadB) and two beta chains (FadA).

It carries out the reaction a (3S)-3-hydroxyacyl-CoA + NAD(+) = a 3-oxoacyl-CoA + NADH + H(+). The enzyme catalyses a (3S)-3-hydroxyacyl-CoA = a (2E)-enoyl-CoA + H2O. It catalyses the reaction a 4-saturated-(3S)-3-hydroxyacyl-CoA = a (3E)-enoyl-CoA + H2O. The catalysed reaction is (3S)-3-hydroxybutanoyl-CoA = (3R)-3-hydroxybutanoyl-CoA. It carries out the reaction a (3Z)-enoyl-CoA = a 4-saturated (2E)-enoyl-CoA. The enzyme catalyses a (3E)-enoyl-CoA = a 4-saturated (2E)-enoyl-CoA. It participates in lipid metabolism; fatty acid beta-oxidation. In terms of biological role, involved in the aerobic and anaerobic degradation of long-chain fatty acids via beta-oxidation cycle. Catalyzes the formation of 3-oxoacyl-CoA from enoyl-CoA via L-3-hydroxyacyl-CoA. It can also use D-3-hydroxyacyl-CoA and cis-3-enoyl-CoA as substrate. The sequence is that of Fatty acid oxidation complex subunit alpha from Pseudomonas paraeruginosa (strain DSM 24068 / PA7) (Pseudomonas aeruginosa (strain PA7)).